Consider the following 347-residue polypeptide: Cannabinoid receptor 2 (347 aa).

Residues 1–33 (MEGCRETEVTNGSNGGLEFNPMKEYMILSSGQQ) lie on the Extracellular side of the membrane. Asn11 carries an N-linked (GlcNAc...) asparagine glycan. The chain crosses the membrane as a helical span at residues 34-59 (IAVAVLCTLMGLLSALENMAVLYIIL). At 60 to 71 (SSRRLRRKPSYL) the chain is on the cytoplasmic side. A helical membrane pass occupies residues 72-92 (FISSLAGADFLASVIFACNFV). The Extracellular portion of the chain corresponds to 93–104 (IFHVFHGVDSNA). Residues 105–129 (IFLLKIGSVTMTFTASVGSLLLTAV) traverse the membrane as a helical segment. Topologically, residues 130–149 (DRYLCLCYPPTYKALVTRGR) are cytoplasmic. A helical membrane pass occupies residues 150 to 172 (ALVALCVMWVLSALISYLPLMGW). Residues 173-188 (TCCPSPCSELFPLIPN) are Extracellular-facing. A helical membrane pass occupies residues 189–214 (DYLLGWLLFIAILFSGIIYTYGYVLW). Over 215 to 246 (KAHRHVATLAEHQDRQVPGIARMRLDVRLAKT) the chain is Cytoplasmic. The chain crosses the membrane as a helical span at residues 247–267 (LGLVLAVLLICWFPALALMGH). Residues 268 to 279 (SLVTTLSDQVKE) lie on the Extracellular side of the membrane. A helical transmembrane segment spans residues 280–301 (AFAFCSMLCLVNSMVNPIIYAL). The Cytoplasmic portion of the chain corresponds to 302–347 (RSGEIRSAAQHCLIGWKKYLQGLGPEGKEEGPRSSVTETEADVKTT). The interval 326–347 (PEGKEEGPRSSVTETEADVKTT) is disordered. A phosphoserine mark is found at Ser335 and Ser336. Thr338 is subject to Phosphothreonine.

Belongs to the G-protein coupled receptor 1 family. As to expression, expressed by cells of hematopoietic origin. Expressed in skin in suprabasal layers and hair follicles, in brain by neurons and glial cells and by osteoblasts, osteocytes, osteoclasts (at protein level).

It is found in the cell membrane. It localises to the cell projection. The protein resides in the dendrite. Its subcellular location is the perikaryon. Heterotrimeric G protein-coupled receptor for endocannabinoid 2-arachidonoylglycerol mediating inhibition of adenylate cyclase. May function in inflammatory response, nociceptive transmission and bone homeostasis. This chain is Cannabinoid receptor 2 (Cnr2), found in Mus musculus (Mouse).